A 102-amino-acid polypeptide reads, in one-letter code: NADH-quinone oxidoreductase subunit K (102 aa).

A run of 3 helical transmembrane segments spans residues 5 to 25 (ITHY…GIFL), 31 to 51 (IIIL…FVAF), and 66 to 86 (FILT…VVFF).

Belongs to the complex I subunit 4L family. NDH-1 is composed of 14 different subunits. Subunits NuoA, H, J, K, L, M, N constitute the membrane sector of the complex.

The protein localises to the cell inner membrane. It carries out the reaction a quinone + NADH + 5 H(+)(in) = a quinol + NAD(+) + 4 H(+)(out). In terms of biological role, NDH-1 shuttles electrons from NADH, via FMN and iron-sulfur (Fe-S) centers, to quinones in the respiratory chain. The immediate electron acceptor for the enzyme in this species is believed to be ubiquinone. Couples the redox reaction to proton translocation (for every two electrons transferred, four hydrogen ions are translocated across the cytoplasmic membrane), and thus conserves the redox energy in a proton gradient. The sequence is that of NADH-quinone oxidoreductase subunit K from Bartonella quintana (strain Toulouse) (Rochalimaea quintana).